The primary structure comprises 302 residues: 1,2-dihydroxynaphthalene dioxygenase (302 aa).

2 VOC domains span residues 9–124 (ELGY…IFWG) and 149–270 (GLGH…PGWR). His152 is a Fe cation binding site. Substrate-binding positions include His152, 199 to 200 (DH), His215, and Tyr256. His215 is a Fe cation binding site. Glu266 is a binding site for Fe cation.

Belongs to the extradiol ring-cleavage dioxygenase family. Fe(2+) is required as a cofactor.

It carries out the reaction naphthalene-1,2-diol + O2 = 2-hydroxychromene-2-carboxylate + H(+). The protein operates within aromatic compound metabolism; naphthalene degradation. With respect to regulation, inhibited by bathophenanthroline sulfonate, o-phenanthroline, 8-hydroxyquinoline, 2,2'-dipyridyl and p-chlormercuribenzoate. Also inhibited by Hg(2+), Cu(2+), Co(2+) and Fe(3+) ions. Functionally, involved in the naphthalene catabolic pathway. Catalyzes the meta-cleavage of 1,2-dihydroxynaphthalene (1,2-DHN) to yield 2-hydroxychromene-2-carboxylic acid. Can also cleave 3-methylcatechol and 4-methylcatechol. In Pseudomonas putida (Arthrobacter siderocapsulatus), this protein is 1,2-dihydroxynaphthalene dioxygenase (nahC).